Here is a 131-residue protein sequence, read N- to C-terminus: Colicin-N immunity protein (131 aa).

The next 2 helical transmembrane spans lie at 66 to 84 and 104 to 124; these read ILTP…FLLT and VFVF…IFVL.

The protein resides in the cell membrane. This Escherichia coli protein is Colicin-N immunity protein (cni).